The following is a 294-amino-acid chain: Protoheme IX farnesyltransferase 1 (294 aa).

9 consecutive transmembrane segments (helical) span residues 8–28 (VTKP…FLLA), 35–55 (PWLM…GCAI), 82–102 (AMAA…LLIA), 107–127 (AAVF…SLYM), 132–152 (VYGT…GYCA), 162–182 (LILL…IAIF), 208–228 (IVLY…SGYT), 229–249 (GAAF…MALR), and 263–283 (QVFA…AVDY).

It belongs to the UbiA prenyltransferase family. Protoheme IX farnesyltransferase subfamily.

It is found in the cell inner membrane. It catalyses the reaction heme b + (2E,6E)-farnesyl diphosphate + H2O = Fe(II)-heme o + diphosphate. It participates in porphyrin-containing compound metabolism; heme O biosynthesis; heme O from protoheme: step 1/1. In terms of biological role, converts heme B (protoheme IX) to heme O by substitution of the vinyl group on carbon 2 of heme B porphyrin ring with a hydroxyethyl farnesyl side group. The chain is Protoheme IX farnesyltransferase 1 from Pseudoalteromonas translucida (strain TAC 125).